A 296-amino-acid polypeptide reads, in one-letter code: Ribosomal RNA small subunit methyltransferase A (296 aa).

Asn-30, Leu-32, Gly-57, Glu-78, Asp-103, and Asn-128 together coordinate S-adenosyl-L-methionine.

It belongs to the class I-like SAM-binding methyltransferase superfamily. rRNA adenine N(6)-methyltransferase family. RsmA subfamily.

Its subcellular location is the cytoplasm. It carries out the reaction adenosine(1518)/adenosine(1519) in 16S rRNA + 4 S-adenosyl-L-methionine = N(6)-dimethyladenosine(1518)/N(6)-dimethyladenosine(1519) in 16S rRNA + 4 S-adenosyl-L-homocysteine + 4 H(+). Functionally, specifically dimethylates two adjacent adenosines (A1518 and A1519) in the loop of a conserved hairpin near the 3'-end of 16S rRNA in the 30S particle. May play a critical role in biogenesis of 30S subunits. This Staphylococcus haemolyticus (strain JCSC1435) protein is Ribosomal RNA small subunit methyltransferase A.